The sequence spans 206 residues: MRPLTPRQAEILELIKRNIADTGMPPTRAEIATRLGFKSANAAEEHLKALAKKGCIEIMPGTSRGIRLPAEEEVVVEYGLPLIGQVAAGEPILAQEHVEQYYQVDPSMFHPTADFLLRVKGDSMKNIGILEGDLLAVHKVQQARNGQVVVARVDDDVTVKRFEKKGNLVYLYAENEDYSPIKVDLSCQSLTIEGLAVGVIRNGDWL.

A DNA-binding region (H-T-H motif) is located at residues 28–48; the sequence is RAEIATRLGFKSANAAEEHLK. Catalysis depends on for autocatalytic cleavage activity residues Ser123 and Lys160.

Belongs to the peptidase S24 family. Homodimer.

It catalyses the reaction Hydrolysis of Ala-|-Gly bond in repressor LexA.. Represses a number of genes involved in the response to DNA damage (SOS response), including recA and lexA. In the presence of single-stranded DNA, RecA interacts with LexA causing an autocatalytic cleavage which disrupts the DNA-binding part of LexA, leading to derepression of the SOS regulon and eventually DNA repair. The protein is LexA repressor of Shewanella putrefaciens (strain CN-32 / ATCC BAA-453).